The primary structure comprises 259 residues: MEDVQGRADTRQIEINKVGIKDIRHPVRVRDRTGRDQHTVATFSMYVNLPQHFKGTHMSRFVSILEGHDREVTVESFHEMLAEMTDRLEAHSGHIEMAFPYFVNKQAPVTGVESLMDYEVTFIGEIHGGRHETWVRVAVPITTLCPCSKEIAERGAHNQRSLVVVTALMDGFVWLEELIDLVEREGSCELYGLLKRPDEKHVTERAYDNPKFVEDVVRDIAGRLNDDGRIAAYSVTSENYESIHNHSAFALIEQDKRGR.

This sequence belongs to the GTP cyclohydrolase IV family.

It carries out the reaction GTP + H2O = 7,8-dihydroneopterin 3'-triphosphate + formate + H(+). It participates in cofactor biosynthesis; 7,8-dihydroneopterin triphosphate biosynthesis; 7,8-dihydroneopterin triphosphate from GTP: step 1/1. Functionally, converts GTP to 7,8-dihydroneopterin triphosphate. In Halorhodospira halophila (strain DSM 244 / SL1) (Ectothiorhodospira halophila (strain DSM 244 / SL1)), this protein is GTP cyclohydrolase FolE2.